Here is a 600-residue protein sequence, read N- to C-terminus: NADH-quinone oxidoreductase subunit C/D (600 aa).

Residues 1–190 (MVNNMTDLTA…DPFELTKAKQ (190 aa)) form an NADH dehydrogenase I subunit C region. The segment at 214-600 (DFMFLNLGPN…IDFVMSDVDR (387 aa)) is NADH dehydrogenase I subunit D.

The protein in the N-terminal section; belongs to the complex I 30 kDa subunit family. It in the C-terminal section; belongs to the complex I 49 kDa subunit family. NDH-1 is composed of 13 different subunits. Subunits NuoB, CD, E, F, and G constitute the peripheral sector of the complex.

It is found in the cell inner membrane. It catalyses the reaction a quinone + NADH + 5 H(+)(in) = a quinol + NAD(+) + 4 H(+)(out). Its function is as follows. NDH-1 shuttles electrons from NADH, via FMN and iron-sulfur (Fe-S) centers, to quinones in the respiratory chain. The immediate electron acceptor for the enzyme in this species is believed to be ubiquinone. Couples the redox reaction to proton translocation (for every two electrons transferred, four hydrogen ions are translocated across the cytoplasmic membrane), and thus conserves the redox energy in a proton gradient. The sequence is that of NADH-quinone oxidoreductase subunit C/D from Salmonella paratyphi A (strain ATCC 9150 / SARB42).